Here is a 557-residue protein sequence, read N- to C-terminus: Potassium-transporting ATPase potassium-binding subunit (557 aa).

10 helical membrane passes run 6–26 (IQLL…GLGL), 59–79 (ALSL…ILFF), 127–147 (AGLT…LLAL), 172–192 (LYVL…FGVV), 247–267 (ISNF…VFLY), 278–298 (WAIF…VWTF), 363–383 (IVFG…LLTV), 410–430 (ILGI…SVSV), 475–495 (VMIA…VLVI), and 520–540 (FYIL…FPVL).

This sequence belongs to the KdpA family. The system is composed of three essential subunits: KdpA, KdpB and KdpC.

The protein localises to the cell inner membrane. Its function is as follows. Part of the high-affinity ATP-driven potassium transport (or Kdp) system, which catalyzes the hydrolysis of ATP coupled with the electrogenic transport of potassium into the cytoplasm. This subunit binds the periplasmic potassium ions and delivers the ions to the membrane domain of KdpB through an intramembrane tunnel. The polypeptide is Potassium-transporting ATPase potassium-binding subunit (Leptospira interrogans serogroup Icterohaemorrhagiae serovar Lai (strain 56601)).